Here is a 248-residue protein sequence, read N- to C-terminus: Ureidoacrylate amidohydrolase RutB (248 aa).

The Proton acceptor role is filled by Asp43. Residue Lys152 is part of the active site. Cys185 serves as the catalytic Nucleophile.

It belongs to the isochorismatase family. RutB subfamily.

It carries out the reaction (Z)-3-ureidoacrylate + H2O + H(+) = (Z)-3-aminoacrylate + NH4(+) + CO2. It catalyses the reaction (Z)-3-ureidoacrylate + H2O = (Z)-3-aminoacrylate + carbamate + H(+). The enzyme catalyses (Z)-2-methylureidoacrylate + H2O + H(+) = (Z)-2-methylaminoacrylate + NH4(+) + CO2. Functionally, hydrolyzes ureidoacrylate to form aminoacrylate and carbamate. The carbamate hydrolyzes spontaneously, thereby releasing one of the nitrogen atoms of the pyrimidine ring as ammonia and one of its carbon atoms as CO2. The sequence is that of Ureidoacrylate amidohydrolase RutB from Serratia proteamaculans (strain 568).